A 468-amino-acid chain; its full sequence is Zinc-regulated transporter 1 (468 aa).

The signal sequence occupies residues 1 to 17; it reads MKFTHLFFIGLLTKVYT. Residues 18-185 lie on the Extracellular side of the membrane; it reads ETVTVLSTRS…VKRDYDIPLR (168 aa). Asn-57 and Asn-67 each carry an N-linked (GlcNAc...) asparagine glycan. Residues 186-206 form a helical membrane-spanning segment; it reads IGLLFVILVTSGIGSFGPIVL. Over 207 to 217 the chain is Cytoplasmic; that stretch reads KQFVNLSQENY. Residues 218-238 traverse the membrane as a helical segment; that stretch reads IIVIIKQFGTGIIISTAFVHL. At 239–257 the chain is on the extracellular side; sequence MTHAQLMWSNSCLKIKYEG. The helical transmembrane segment at 258 to 278 threads the bilayer; the sequence is TGASITMAGIFIAFIIEYIAL. Residues 279–314 lie on the Cytoplasmic side of the membrane; the sequence is RIVNARDTGKVDKKEIEETSSNEQSLHGISVNDKIS. The chain crosses the membrane as a helical span at residues 315–335; it reads VMILEAGIIFHSILIGITLVV. At 336–338 the chain is on the extracellular side; that stretch reads TDD. The chain crosses the membrane as a helical span at residues 339-359; that stretch reads VYFITLFIVIVFHQFFEGLAL. Over 360-374 the chain is Cytoplasmic; the sequence is SSRIISITNASLSTK. The chain crosses the membrane as a helical span at residues 375 to 395; the sequence is LVMALMFALITPIGMAIGIGV. Residues 396 to 406 lie on the Extracellular side of the membrane; it reads LNKFNGNDPST. Residues 407–427 form a helical membrane-spanning segment; sequence LIALGTLDSFSAGVLLWTGLI. Topologically, residues 428–447 are cytoplasmic; sequence EMWSHDWLHGHLRNSSFVKT. The chain crosses the membrane as a helical span at residues 448 to 468; sequence TVALVSLILGMLLMSLLGNWA.

It belongs to the ZIP transporter (TC 2.A.5) family.

The protein localises to the cell membrane. The catalysed reaction is Zn(2+)(in) = Zn(2+)(out). Functionally, zinc transporter that acts with PRA1 in sequestration of zinc from host tissues during infection. The pH-regulated antigen 1 (PRA1) binds zinc from its environment and then reassociates with ZRT1 to acquire this essential metal. The polypeptide is Zinc-regulated transporter 1 (ZRT101) (Candida albicans (strain SC5314 / ATCC MYA-2876) (Yeast)).